Consider the following 405-residue polypeptide: uncharacterized protein (405 aa).

The first 20 residues, 1-20 (MKAKLALSIIGLVLASLVAG), serve as a signal peptide directing secretion. Cys21 is modified (N-acetylcysteine). A lipid anchor (S-archaeol cysteine) is attached at Cys21.

This sequence belongs to the BMP lipoprotein family.

The protein localises to the cell membrane. This is an uncharacterized protein from Pyrococcus horikoshii (strain ATCC 700860 / DSM 12428 / JCM 9974 / NBRC 100139 / OT-3).